The following is a 204-amino-acid chain: High frequency lysogenization protein HflD homolog (204 aa).

The protein belongs to the HflD family.

It localises to the cytoplasm. The protein resides in the cell inner membrane. In Actinobacillus succinogenes (strain ATCC 55618 / DSM 22257 / CCUG 43843 / 130Z), this protein is High frequency lysogenization protein HflD homolog.